Here is a 673-residue protein sequence, read N- to C-terminus: Flotillin family inner membrane protein sll1021 (673 aa).

Residues 60–80 (LLFFPVVIIAVIFLILVTIFL) traverse the membrane as a helical segment. Residues 639-673 (LQDPPSVSPPSAAVSEDDWPDLAPPTETNFSPEEI) form a disordered region. Polar residues predominate over residues 664–673 (TETNFSPEEI).

It belongs to the band 7/mec-2 family. Flotillin subfamily. In terms of assembly, homooligomerizes.

It is found in the cell inner membrane. It localises to the membrane raft. Found in functional membrane microdomains (FMM) that may be equivalent to eukaryotic membrane rafts. FMMs are highly dynamic and increase in number as cells age. Flotillins are thought to be important factors in membrane fluidity. The chain is Flotillin family inner membrane protein sll1021 from Synechocystis sp. (strain ATCC 27184 / PCC 6803 / Kazusa).